The chain runs to 560 residues: Cilia- and flagella-associated protein 184 (560 aa).

Basic and acidic residues predominate over residues 1 to 12 (MEGGSEHTKDPG). Residues 1–209 (MEGGSEHTKD…QEEGKPLGGR (209 aa)) are disordered. 2 stretches are compositionally biased toward acidic residues: residues 41 to 61 (GELE…EEEA) and 101 to 110 (EPEEPAEAGA). Basic and acidic residues-rich tracts occupy residues 127–144 (AEAR…KEVR) and 179–209 (ETRR…LGGR). Coiled-coil stretches lie at residues 357–481 (QAAL…QGRD) and 510–536 (DSLL…LKRH).

The protein belongs to the CFAP184 family. As to quaternary structure, forms a complex with CFAP263; the interaction is required for functional activity in cilia.

The protein localises to the cell projection. It localises to the cilium. Its subcellular location is the cytoplasm. The protein resides in the cytoskeleton. It is found in the microtubule organizing center. The protein localises to the centrosome. In complex with CFAP263, acts as a regulator of ciliary beating that connects radial spoke 3 (RS3) to the inner dynein arm (IDA) and the nexin-dynein regulatory complex (N-DRC). The complex is positioned parallel to N-DRC and forms a connection between the arch at the base of RS3, the IDA tail and N-DRC. The sequence is that of Cilia- and flagella-associated protein 184 (CFAP184) from Macaca fascicularis (Crab-eating macaque).